The primary structure comprises 414 residues: Patatin-like protein 1 (414 aa).

In terms of domain architecture, PNPLA spans 20–224 (LAIDGGGIRG…AANNPTMVAM (205 aa)). The GXGXXG motif lies at 24 to 29 (GGGIRG). The GXSXG signature appears at 62–66 (GTSTG). The active-site Nucleophile is serine 64. The active-site Proton acceptor is the aspartate 211. Positions 211-213 (DGG) match the DGA/G motif.

The protein belongs to the patatin family.

Its function is as follows. Possesses non-specific lipolytic acyl hydrolase (LAH) activity. Hydrolyzes phospholipids as well as galactolipids. May play a role in disease resistance. The sequence is that of Patatin-like protein 1 (PLP1) from Oryza sativa subsp. indica (Rice).